A 580-amino-acid polypeptide reads, in one-letter code: Protein O-linked-mannose beta-1,4-N-acetylglucosaminyltransferase 2 (580 aa).

At 1–4 the chain is on the cytoplasmic side; sequence MHLS. A helical; Signal-anchor for type II membrane protein membrane pass occupies residues 5–25; it reads AVFNALLVSVLAAVLWKHVRL. Residues 26 to 580 are Lumenal-facing; the sequence is REHAATLEEE…PFADVLVCST (555 aa). Residues asparagine 99 and asparagine 276 are each glycosylated (N-linked (GlcNAc...) asparagine). The Fibronectin type-III domain occupies 488 to 580; that stretch reads ARCQASVQGA…PFADVLVCST (93 aa).

Belongs to the glycosyltransferase 61 family. In terms of tissue distribution, mainly expressed in the central nervous system.

Its subcellular location is the endoplasmic reticulum membrane. It catalyses the reaction 3-O-(alpha-D-mannosyl)-L-threonyl-[protein] + UDP-N-acetyl-alpha-D-glucosamine = 3-O-(N-acetyl-beta-D-glucosaminyl-(1-&gt;4)-alpha-D-mannosyl)-L-threonyl-[protein] + UDP + H(+). The protein operates within protein modification; protein glycosylation. In terms of biological role, O-linked mannose beta-1,4-N-acetylglucosaminyltransferase that transfers UDP-N-acetyl-D-glucosamine to the 4-position of the mannose to generate N-acetyl-D-glucosamine-beta-1,4-O-D-mannosylprotein. Involved in the biosynthesis of the phosphorylated O-mannosyl trisaccharide (N-acetylgalactosamine-beta-3-N-acetylglucosamine-beta-4-(phosphate-6-)mannose), a carbohydrate structure present in alpha-dystroglycan (DAG1), which is required for binding laminin G-like domain-containing extracellular proteins with high affinity. This is Protein O-linked-mannose beta-1,4-N-acetylglucosaminyltransferase 2 (Pomgnt2) from Mus musculus (Mouse).